The following is a 220-amino-acid chain: Probable 26S proteasome regulatory subunit p27 (220 aa).

The PDZ domain maps to 119 to 196 (ARRNNDDQAI…PVLLLREGQI (78 aa)).

Belongs to the proteasome subunit p27 family. As to quaternary structure, part of a transient complex containing NAS2, RPT4 and RPT5 formed during the assembly of the 26S proteasome.

In terms of biological role, acts as a chaperone during the assembly of the 26S proteasome, specifically of the base subcomplex of the 19S regulatory complex (RC). During the base subcomplex assembly is part of a NAS2:RPT4:RPT5 module; NAS2 is released during the further base assembly process. The protein is Probable 26S proteasome regulatory subunit p27 (NAS2) of Saccharomyces cerevisiae (strain ATCC 204508 / S288c) (Baker's yeast).